Here is a 152-residue protein sequence, read N- to C-terminus: Small ribosomal subunit protein uS9 (152 aa).

The protein belongs to the universal ribosomal protein uS9 family.

This is Small ribosomal subunit protein uS9 from Mycobacterium ulcerans (strain Agy99).